A 75-amino-acid polypeptide reads, in one-letter code: Large ribosomal subunit protein bL31 (75 aa).

Belongs to the bacterial ribosomal protein bL31 family. Type A subfamily. As to quaternary structure, part of the 50S ribosomal subunit.

In terms of biological role, binds the 23S rRNA. In Chlorobium phaeobacteroides (strain BS1), this protein is Large ribosomal subunit protein bL31.